Here is a 125-residue protein sequence, read N- to C-terminus: Cyclic diguanosine monophosphate-binding protein PA4608 (125 aa).

3',3'-c-di-GMP is bound at residue 6–13; the sequence is DERRRFHR. Residues 7–103 enclose the PilZ domain; the sequence is ERRRFHRIAF…SISHLRRLVE (97 aa). An RXXXR motif; surrounds the surface of the c-di-GMP binding site motif is present at residues 9-13; sequence RRFHR. A DXSXXG motif; surrounds the surface of the c-di-GMP binding site motif is present at residues 35-40; that stretch reads DVSLHG. W77 is a 3',3'-c-di-GMP binding site.

As to quaternary structure, monomer in both c-di-GMP-bound and free forms.

Its function is as follows. Binds the second messenger bis-(3'-5') cyclic dimeric guanosine monophosphate (c-di-GMP). Can bind two c-di-GMP molecules per monomer. May play a role in bacterial second-messenger regulated processes. Binding to c-di-GMP induces a conformational change of the C- and N-termini resulting in the exposure of a highly negative surface on one side of the protein to a possible effector protein. This is Cyclic diguanosine monophosphate-binding protein PA4608 from Pseudomonas aeruginosa (strain ATCC 15692 / DSM 22644 / CIP 104116 / JCM 14847 / LMG 12228 / 1C / PRS 101 / PAO1).